The chain runs to 163 residues: Cyclic pyranopterin monophosphate synthase (163 aa).

Residues 76–78 (LCH) and 114–115 (ME) each bind substrate. Asp-129 is a catalytic residue.

This sequence belongs to the MoaC family. As to quaternary structure, homohexamer; trimer of dimers.

The catalysed reaction is (8S)-3',8-cyclo-7,8-dihydroguanosine 5'-triphosphate = cyclic pyranopterin phosphate + diphosphate. Its pathway is cofactor biosynthesis; molybdopterin biosynthesis. Functionally, catalyzes the conversion of (8S)-3',8-cyclo-7,8-dihydroguanosine 5'-triphosphate to cyclic pyranopterin monophosphate (cPMP). The sequence is that of Cyclic pyranopterin monophosphate synthase from Desulfovibrio desulfuricans (strain ATCC 27774 / DSM 6949 / MB).